Reading from the N-terminus, the 121-residue chain is Small ribosomal subunit protein bS6 (121 aa).

It belongs to the bacterial ribosomal protein bS6 family.

Its function is as follows. Binds together with bS18 to 16S ribosomal RNA. In Rickettsia prowazekii (strain Madrid E), this protein is Small ribosomal subunit protein bS6 (rpsF).